The following is an 847-amino-acid chain: Follistatin-related protein 5 (847 aa).

An N-terminal signal peptide occupies residues 1–20 (MFRCWSAILILGFIFLASEG). Residues 81–135 (ETRHAECACMDLCKQHYKPVCGSDGEFYENHCEVHRAACLKKQKITIVHNEDCFF) enclose the Kazal-like domain. Intrachain disulfides connect cysteine 87–cysteine 119, cysteine 93–cysteine 112, and cysteine 101–cysteine 133. 2 EF-hand domains span residues 175 to 210 (RKKP…EELN) and 211 to 246 (KDLS…QVIQ). Residues aspartate 188, aspartate 190, asparagine 192, glutamate 199, aspartate 226, asparagine 228, aspartate 230, histidine 232, and glutamate 237 each coordinate Ca(2+). 2 consecutive Ig-like domains span residues 250–338 (PEDQ…FQVN) and 341–426 (PVIR…EDIS). 2 disulfide bridges follow: cysteine 270–cysteine 321 and cysteine 362–cysteine 413. 2 N-linked (GlcNAc...) asparagine glycosylation sites follow: asparagine 318 and asparagine 394.

The protein localises to the secreted. The sequence is that of Follistatin-related protein 5 (Fstl5) from Mus musculus (Mouse).